Consider the following 845-residue polypeptide: Protein P (845 aa).

Residues 1-179 (MPLSYQHFRK…FCGSPYSWEQ (179 aa)) form a terminal protein domain (TP) region. A spacer region spans residues 180 to 348 (ELHHGRLVIK…YCLSHLVNLL (169 aa)). Residues 349–692 (EDWGPCTEHG…YMNLYPVARQ (344 aa)) form a polymerase/reverse transcriptase domain (RT) region. Positions 359-602 (EHHIRIPRTP…YSLNFMGYVI (244 aa)) constitute a Reverse transcriptase domain. Residues D431, D553, and D554 each coordinate Mg(2+).

Belongs to the hepadnaviridae P protein family.

The catalysed reaction is DNA(n) + a 2'-deoxyribonucleoside 5'-triphosphate = DNA(n+1) + diphosphate. It catalyses the reaction Endonucleolytic cleavage to 5'-phosphomonoester.. With respect to regulation, activated by host HSP70 and HSP40 in vitro to be able to bind the epsilon loop of the pgRNA. Because deletion of the RNase H region renders the protein partly chaperone-independent, the chaperones may be needed indirectly to relieve occlusion of the RNA-binding site by this domain. Inhibited by several reverse-transcriptase inhibitors: Lamivudine, Adefovir and Entecavir. In terms of biological role, multifunctional enzyme that converts the viral RNA genome into dsDNA in viral cytoplasmic capsids. This enzyme displays a DNA polymerase activity that can copy either DNA or RNA templates, and a ribonuclease H (RNase H) activity that cleaves the RNA strand of RNA-DNA heteroduplexes in a partially processive 3'- to 5'-endonucleasic mode. Neo-synthesized pregenomic RNA (pgRNA) are encapsidated together with the P protein, and reverse-transcribed inside the nucleocapsid. Initiation of reverse-transcription occurs first by binding the epsilon loop on the pgRNA genome, and is initiated by protein priming, thereby the 5'-end of (-)DNA is covalently linked to P protein. Partial (+)DNA is synthesized from the (-)DNA template and generates the relaxed circular DNA (RC-DNA) genome. After budding and infection, the RC-DNA migrates in the nucleus, and is converted into a plasmid-like covalently closed circular DNA (cccDNA). The activity of P protein does not seem to be necessary for cccDNA generation, and is presumably released from (+)DNA by host nuclear DNA repair machinery. The protein is Protein P of Homo sapiens (Human).